The primary structure comprises 93 residues: Large ribosomal subunit protein uL23cz/uL23cy (93 aa).

The protein belongs to the universal ribosomal protein uL23 family. Part of the 50S ribosomal subunit.

It localises to the plastid. The protein resides in the chloroplast. Binds to 23S rRNA. The polypeptide is Large ribosomal subunit protein uL23cz/uL23cy (rpl23-A) (Nandina domestica (Heavenly bamboo)).